A 137-amino-acid chain; its full sequence is Proofreading thioesterase EntH (137 aa).

E63 acts as the Nucleophile or proton acceptor in catalysis.

It belongs to the thioesterase PaaI family. Homotetramer. Dimer of dimers. Interacts specifically with the aryl carrier protein (ArCP) domain of EntB.

It is found in the cytoplasm. It participates in siderophore biosynthesis; enterobactin biosynthesis. Functionally, required for optimal enterobactin synthesis. Acts as a proofreading enzyme that prevents EntB misacylation by hydrolyzing the thioester bound existing between EntB and wrongly charged molecules. This chain is Proofreading thioesterase EntH, found in Salmonella typhimurium (strain LT2 / SGSC1412 / ATCC 700720).